Consider the following 248-residue polypeptide: Tyrosine recombinase XerD-like (248 aa).

The Core-binding (CB) domain occupies 1–72; it reads MKSYIEPFIA…TANQFLYYLY (72 aa). In terms of domain architecture, Tyr recombinase spans 85–248; the sequence is DTMKVMRTEK…PVTLEKYYKS (164 aa). Active-site residues include lysine 149 and arginine 213. Residue tyrosine 245 is the O-(3'-phospho-DNA)-tyrosine intermediate of the active site.

This sequence belongs to the 'phage' integrase family. XerD-like subfamily.

It is found in the cytoplasm. In terms of biological role, putative tyrosine recombinase. Not involved in the cutting and rejoining of the recombining DNA molecules on dif(SL) site. The sequence is that of Tyrosine recombinase XerD-like from Streptococcus pyogenes serotype M3 (strain ATCC BAA-595 / MGAS315).